The sequence spans 30 residues: U10-ctenitoxin-Co1b (30 aa).

Intrachain disulfides connect C2–C17 and C9–C22.

As to expression, expressed by the venom gland.

It is found in the secreted. Its function is as follows. Antagonist of L-type calcium channels (Cav1/CACNA1). This is U10-ctenitoxin-Co1b from Ctenus ornatus (Brazilian spider).